The sequence spans 322 residues: MWEKVDQLTPSRYSPYRFFSAQEWAAFRADTPLTLTYEEVKRLRSLGDPIDLDEVRRIYLSLSRLLYAHVEASQLLFRQRQQFLNMEESYKTPFIIGVAGSVAVGKSTMARILKELLARWPSSPKVDLVTTDGFLYPNAVLREQNMMERKGFPESYDIGAVLRFLSAIKAGMSRVRAPLYSHLSYDVLPGEYQIVDKPDILIFEGINVLQVRDLPEDGKMVPFVSDFFDFSIYIDADPRLIHKWYIDRFMRLRETAFRDPQSFFHRYSQLSQEAARSIAEGLWQNINMKNLNENILPTRPRADLILRKGSDHLIEEVALRKI.

ATP is bound at residue Gly-100–Ser-107.

Belongs to the prokaryotic pantothenate kinase family.

It localises to the cytoplasm. It catalyses the reaction (R)-pantothenate + ATP = (R)-4'-phosphopantothenate + ADP + H(+). The protein operates within cofactor biosynthesis; coenzyme A biosynthesis; CoA from (R)-pantothenate: step 1/5. The chain is Pantothenate kinase from Brucella abortus (strain 2308).